The chain runs to 1416 residues: Uveal autoantigen with coiled-coil domains and ankyrin repeats (1416 aa).

M1 is modified (N-acetylmethionine). The disordered stretch occupies residues 1 to 24 (MKSLKSRLRRQDVPGPASSGAAAA). 6 ANK repeats span residues 38–66 (LMKAAERGDVEKVTSILAKKGVNPGKLDV), 67–96 (EGRSVFHVVTSKGNLECLNAILIHGVDITT), 100–129 (AGRNALHLAAKYGHALCLQKLLQYNCPTEH), 133–162 (QGRTALHDAAMADCPSSIQLLCDHGASVNA), 166–195 (DGRTPLVLATQMSRPTICQLLIDRGADVNS), and 199–228 (QNRTALMLGCEYGCRDAVEVLIKNGADISL). Coiled-coil stretches lie at residues 286-374 (VKSH…NRFK) and 438-1386 (ENEI…IYRT). K1035 is covalently cross-linked (Glycyl lysine isopeptide (Lys-Gly) (interchain with G-Cter in SUMO2)).

Component of the apoptosome complex, composed of APAF1, pro-caspase-9 and UACA. In the complex, it probably interacts directly with APAF1. Interacts with LGALS3, ARF6 and ACTB. Interacts with RAB39A. Highly expressed in skeletal muscle, heart, kidney and pancreas. Expressed in choroid, retina and epidermal melanocytes. Expressed in eye muscles and thyroid follicular cells.

Its subcellular location is the nucleus. The protein localises to the cytoplasm. It is found in the cytoskeleton. Regulates APAF1 expression and plays an important role in the regulation of stress-induced apoptosis. Promotes apoptosis by regulating three pathways, apoptosome up-regulation, LGALS3/galectin-3 down-regulation and NF-kappa-B inactivation. Regulates the redistribution of APAF1 into the nucleus after proapoptotic stress. Down-regulates the expression of LGALS3 by inhibiting NFKB1. In terms of biological role, modulates isoactin dynamics to regulate the morphological alterations required for cell growth and motility. Interaction with ARF6 may modulate cell shape and motility after injury. May be involved in multiple neurite formation. The chain is Uveal autoantigen with coiled-coil domains and ankyrin repeats (UACA) from Homo sapiens (Human).